The following is a 154-amino-acid chain: Ribosomal RNA large subunit methyltransferase H (154 aa).

S-adenosyl-L-methionine contacts are provided by residues leucine 70, glycine 102, and leucine 121–leucine 126.

It belongs to the RNA methyltransferase RlmH family. Homodimer.

Its subcellular location is the cytoplasm. It catalyses the reaction pseudouridine(1915) in 23S rRNA + S-adenosyl-L-methionine = N(3)-methylpseudouridine(1915) in 23S rRNA + S-adenosyl-L-homocysteine + H(+). Specifically methylates the pseudouridine at position 1915 (m3Psi1915) in 23S rRNA. The sequence is that of Ribosomal RNA large subunit methyltransferase H from Geobacter sp. (strain M21).